The primary structure comprises 125 residues: Napin-3 (125 aa).

4 disulfides stabilise this stretch: C10–C62, C23–C51, C52–C107, and C64–C115.

The protein belongs to the 2S seed storage albumins family. The mature protein consists of a small and a large chain linked by disulfide bonds.

Functionally, the small, basic, water-soluble napins are one of the two major kinds of storage proteins synthesized in the seed during its maturation. This chain is Napin-3, found in Brassica napus (Rape).